Reading from the N-terminus, the 185-residue chain is NEDD8-conjugating enzyme UBE2F (185 aa).

Met-1 bears the N-acetylmethionine mark. An interaction with UBA3 region spans residues 1-29 (MLTLASKLKRDDGLKGSRASATASDSTRR). In terms of domain architecture, UBC core spans 32-185 (VRDRLLVKEV…VEDYIKRYAR (154 aa)). Catalysis depends on Cys-116, which acts as the Glycyl thioester intermediate.

It belongs to the ubiquitin-conjugating enzyme family. UBE2F subfamily. Interacts with UBA3 and RBX2. Interacts (N-terminally acetylated form) with (via DCUN1 domain) DCUN1D1, DCUN1D2, DCUN1D3, DCUN1D4 and DCUN1D5. Post-translationally, the acetylation of Met-1 increases affinity for DCUN1D3 by about 2 orders of magnitude and is crucial for NEDD8 transfer to cullins.

The catalysed reaction is [E1 NEDD8-activating enzyme]-S-[NEDD8 protein]-yl-L-cysteine + [E2 NEDD8-conjugating enzyme]-L-cysteine = [E1 NEDD8-activating enzyme]-L-cysteine + [E2 NEDD8-conjugating enzyme]-S-[NEDD8-protein]-yl-L-cysteine.. Its pathway is protein modification; protein neddylation. Accepts the ubiquitin-like protein NEDD8 from the UBA3-NAE1 E1 complex and catalyzes its covalent attachment to other proteins. Together with the E3 ubiquitin ligase RNF7/RBX2, specifically neddylates cullin-5 (CUL5). Does not neddylate CUL1, CUL2, CUL3, CUL4A or CUL4B. Mediates neddylation of the CUL9-RBX1 complex. The protein is NEDD8-conjugating enzyme UBE2F (UBE2F) of Bos taurus (Bovine).